Here is a 129-residue protein sequence, read N- to C-terminus: MYFLYVGVFGALGGMCRYAMNLWLGGGDFPSATLAVNLIGCFLLAFLMQFLAEKSRISLVILNGIGTGFIGAFTTFSAFSVDTIQLVQSGAWLFAVSYVLASFIGGLIMVKFGRMLSNKLLNRGEHRVS.

4 helical membrane passes run 3–23, 32–52, 59–79, and 90–110; these read FLYVGVFGALGGMCRYAMNLW, ATLAVNLIGCFLLAFLMQFLA, LVILNGIGTGFIGAFTTFSAF, and GAWLFAVSYVLASFIGGLIMV. Residues glycine 71 and threonine 74 each coordinate Na(+).

Belongs to the fluoride channel Fluc/FEX (TC 1.A.43) family.

The protein resides in the cell membrane. The catalysed reaction is fluoride(in) = fluoride(out). Its activity is regulated as follows. Na(+) is not transported, but it plays an essential structural role and its presence is essential for fluoride channel function. Its function is as follows. Fluoride-specific ion channel. Important for reducing fluoride concentration in the cell, thus reducing its toxicity. The sequence is that of Fluoride-specific ion channel FluC 2 from Listeria monocytogenes serotype 4b (strain F2365).